A 409-amino-acid chain; its full sequence is Broad specificity amino-acid racemase (409 aa).

The N-terminal stretch at 1-23 (MPFSRTLLALSLGMALLQNPAFA) is a signal peptide. Cysteines 70 and 96 form a disulfide. Residue Lys-74 is the Proton acceptor of the active site. The residue at position 74 (Lys-74) is an N6-(pyridoxal phosphate)lysine. Substrate is bound at residue Arg-173. Catalysis depends on Tyr-300, which acts as the Proton acceptor. Position 348 (Met-348) interacts with substrate.

It belongs to the alanine racemase family. Bsr subfamily. As to quaternary structure, homodimer. Requires pyridoxal 5'-phosphate as cofactor.

The protein localises to the periplasm. It carries out the reaction an L-alpha-amino acid = a D-alpha-amino acid. The enzyme catalyses L-lysine = D-lysine. It catalyses the reaction L-arginine = D-arginine. The catalysed reaction is L-ornithine = D-ornithine. It carries out the reaction L-alanine = D-alanine. The enzyme catalyses L-methionine = D-methionine. Functionally, amino-acid racemase able to utilize a broad range of substrates. Is mostly active with lysine and arginine and, to a lesser extent, with ornithine, whereas is about 10 times less active with alanine, methionine and ethionine. With phenylalanine as substrate only a trace activity is detectable, and is inactive with glutamate. Plays a key role in the catabolism of D-arginine and D-lysine, that allows P.taetrolens strain NBRC 3460 to grow on these basic D-amino acids as a sole carbon source. This is Broad specificity amino-acid racemase from Pseudomonas taetrolens.